A 415-amino-acid polypeptide reads, in one-letter code: MSWLIIADDLSGAADCAIGYAMSGARTVVTLEAAPAGADLSQADVVACDVDSRRMAPQEAAARNLEAWHRGQGASRRLYKKIDSTLRGNWAAETAALAPLAGLAIVAPAFPATGRTTAGGCMFVNGQPLEDSDIWRLEALTGRADLVALLAARGLRATLLPLDTVRAGDATLRLTIAGLAREGVRAVVCDAQTEQDLAALAAATAQLDVPAFWVGSGGLARALAAPCLFEGGAPQPLPAPEGGPVLTLVGSLSGISGRQAACLRERTGMQSLVVPPRILREGAGHADWDAAQQSITGCLRAGRDLLVSIGRDDAFDPGEGPRLSAALAQLSLPGFQHTRGLIATGGETARAMLSAAGIGALMLRREVEPGVPLSDTPALPGVPARRVATKAGAFGSEAALWHAWQAMTESRAPSA.

Residues aspartate 9, arginine 53, and 81-84 (KIDS) each bind substrate. ATP-binding positions include serine 251, 345 to 348 (GGET), and glycine 392.

It belongs to the four-carbon acid sugar kinase family.

The catalysed reaction is D-threonate + ATP = 4-O-phospho-D-threonate + ADP + H(+). Catalyzes the ATP-dependent phosphorylation of D-threonate to D-threonate 4-phosphate. Can also phosphorylate 4-hydroxy-L-threonine, with lower efficiency. In Cupriavidus necator (strain ATCC 17699 / DSM 428 / KCTC 22496 / NCIMB 10442 / H16 / Stanier 337) (Ralstonia eutropha), this protein is D-threonate kinase.